The following is a 322-amino-acid chain: 4-diphosphocytidyl-2-C-methyl-D-erythritol kinase (322 aa).

Residue lysine 27 is part of the active site. 112–122 contacts ATP; sequence PVAGGMAGGSA. Aspartate 154 is a catalytic residue.

The protein belongs to the GHMP kinase family. IspE subfamily.

It carries out the reaction 4-CDP-2-C-methyl-D-erythritol + ATP = 4-CDP-2-C-methyl-D-erythritol 2-phosphate + ADP + H(+). It participates in isoprenoid biosynthesis; isopentenyl diphosphate biosynthesis via DXP pathway; isopentenyl diphosphate from 1-deoxy-D-xylulose 5-phosphate: step 3/6. Catalyzes the phosphorylation of the position 2 hydroxy group of 4-diphosphocytidyl-2C-methyl-D-erythritol. In Mycolicibacterium smegmatis (strain ATCC 700084 / mc(2)155) (Mycobacterium smegmatis), this protein is 4-diphosphocytidyl-2-C-methyl-D-erythritol kinase.